Consider the following 631-residue polypeptide: Probable sulfate transporter 3.3 (631 aa).

The Cytoplasmic segment spans residues Met1–Asp69. A helical membrane pass occupies residues Val70 to Leu90. The Extracellular portion of the chain corresponds to Ala91 to Asn92. The chain crosses the membrane as a helical span at residues Leu93–Gly113. The Cytoplasmic portion of the chain corresponds to Ser114 to Asp117. Residues Leu118–Val138 traverse the membrane as a helical segment. Topologically, residues Ser139 to Pro144 are extracellular. A helical transmembrane segment spans residues Val145–Leu165. At Gly166–Gly171 the chain is on the cytoplasmic side. The chain crosses the membrane as a helical span at residues Phe172–Ile192. Residues Val193 to His223 are Extracellular-facing. A helical membrane pass occupies residues Thr224–Ser244. The Cytoplasmic portion of the chain corresponds to Thr245 to Phe256. A helical transmembrane segment spans residues Trp257–Phe277. Residues Arg278–Leu309 lie on the Extracellular side of the membrane. The helical transmembrane segment at Ala310–Val330 threads the bilayer. The Cytoplasmic portion of the chain corresponds to Gly331–Glu347. A helical transmembrane segment spans residues Met348–Gly368. Topologically, residues Ala369–Ala384 are extracellular. Residues Val385–Phe405 traverse the membrane as a helical segment. At Glu406–Asn410 the chain is on the cytoplasmic side. Residues Val411–Cys431 traverse the membrane as a helical segment. Topologically, residues His432–Phe441 are extracellular. Residues Leu442–Ile462 form a helical membrane-spanning segment. Residues Ala463–Val631 are Cytoplasmic-facing. Residues His497–Leu621 enclose the STAS domain.

It belongs to the SLC26A/SulP transporter (TC 2.A.53) family. As to expression, expressed only in leaves.

Its subcellular location is the membrane. In terms of biological role, h(+)/sulfate cotransporter that may play a role in the regulation of sulfate assimilation. The polypeptide is Probable sulfate transporter 3.3 (SULTR3;3) (Arabidopsis thaliana (Mouse-ear cress)).